Consider the following 153-residue polypeptide: Large ribosomal subunit protein uL23m (153 aa).

Residues 131–153 (MADEQQRQGSDPQRGGVPNWFSL) are disordered.

Belongs to the universal ribosomal protein uL23 family. As to quaternary structure, component of the mitochondrial ribosome large subunit (39S) which comprises a 16S rRNA and about 50 distinct proteins.

It is found in the mitochondrion. In Otolemur garnettii (Small-eared galago), this protein is Large ribosomal subunit protein uL23m (MRPL23).